The following is a 289-amino-acid chain: Prepilin leader peptidase/N-methyltransferase (289 aa).

The helical transmembrane segment at 13 to 33 threads the bilayer; the sequence is AFVLCALVLGLLVGSFLNVVI. The Zn(2+) site is built by cysteine 72, cysteine 75, cysteine 97, and cysteine 100. The next 5 helical transmembrane spans lie at 128–148, 159–179, 183–203, 228–248, and 256–276; these read FSWQAGAMLLLTWGLLAMSMI, LVLPLLWLGLIINSFGLFASL, LWGAVVGYLALWSVYWLFKLV, VLPLTILLSSVVGAVLGTVML, and GTPIPFGPYLAIAGWVALLWG.

The protein belongs to the peptidase A24 family. Zn(2+) serves as cofactor.

It is found in the cell inner membrane. It catalyses the reaction Typically cleaves a -Gly-|-Phe- bond to release an N-terminal, basic peptide of 5-8 residues from type IV prepilin, and then N-methylates the new N-terminal amino group, the methyl donor being S-adenosyl-L-methionine.. Its function is as follows. Plays an essential role in type IV pili and type II pseudopili formation by proteolytically removing the leader sequence from substrate proteins and subsequently monomethylating the alpha-amino group of the newly exposed N-terminal phenylalanine. The chain is Prepilin leader peptidase/N-methyltransferase (pilD) from Stutzerimonas stutzeri (Pseudomonas stutzeri).